A 181-amino-acid polypeptide reads, in one-letter code: Adenylate kinase (181 aa).

Residue 10–15 (GAGKGT) participates in ATP binding. Positions 30–59 (STGELFRSNIENGTKLGLEAKRYLDAGDLV) are NMP. AMP-binding positions include Thr-31, Arg-36, 57–59 (DLV), 85–88 (GFPR), and Gln-92. The LID stretch occupies residues 126-132 (ARGRADD). Position 127 (Arg-127) interacts with ATP. Positions 129 and 140 each coordinate AMP. Gly-166 contacts ATP.

This sequence belongs to the adenylate kinase family. Monomer.

It localises to the cytoplasm. It catalyses the reaction AMP + ATP = 2 ADP. Its pathway is purine metabolism; AMP biosynthesis via salvage pathway; AMP from ADP: step 1/1. Catalyzes the reversible transfer of the terminal phosphate group between ATP and AMP. Plays an important role in cellular energy homeostasis and in adenine nucleotide metabolism. This chain is Adenylate kinase, found in Mycolicibacterium paratuberculosis (strain ATCC BAA-968 / K-10) (Mycobacterium paratuberculosis).